The sequence spans 348 residues: UDP-3-O-acylglucosamine N-acyltransferase (348 aa).

His248 acts as the Proton acceptor in catalysis.

The protein belongs to the transferase hexapeptide repeat family. LpxD subfamily. In terms of assembly, homotrimer.

It catalyses the reaction a UDP-3-O-[(3R)-3-hydroxyacyl]-alpha-D-glucosamine + a (3R)-hydroxyacyl-[ACP] = a UDP-2-N,3-O-bis[(3R)-3-hydroxyacyl]-alpha-D-glucosamine + holo-[ACP] + H(+). It participates in bacterial outer membrane biogenesis; LPS lipid A biosynthesis. Catalyzes the N-acylation of UDP-3-O-acylglucosamine using 3-hydroxyacyl-ACP as the acyl donor. Is involved in the biosynthesis of lipid A, a phosphorylated glycolipid that anchors the lipopolysaccharide to the outer membrane of the cell. The protein is UDP-3-O-acylglucosamine N-acyltransferase of Rippkaea orientalis (strain PCC 8801 / RF-1) (Cyanothece sp. (strain PCC 8801)).